Consider the following 427-residue polypeptide: Peptidase B (427 aa).

Mn(2+)-binding residues include lysine 195 and aspartate 200. Residue lysine 207 is part of the active site. Mn(2+)-binding residues include aspartate 218, aspartate 277, and glutamate 279. The active site involves arginine 281.

This sequence belongs to the peptidase M17 family. In terms of assembly, homohexamer. Mn(2+) is required as a cofactor.

It is found in the cytoplasm. It carries out the reaction Release of an N-terminal amino acid, Xaa, from a peptide or arylamide. Xaa is preferably Glu or Asp but may be other amino acids, including Leu, Met, His, Cys and Gln.. Functionally, probably plays an important role in intracellular peptide degradation. This Escherichia coli (strain SE11) protein is Peptidase B.